A 545-amino-acid polypeptide reads, in one-letter code: Endo-beta-N-acetylglucosaminidase (545 aa).

A signal peptide spans Met-1–Ala-36. The 283-residue stretch at Arg-51–Asn-333 folds into the GH18 domain. The active-site Proton donor is Glu-184. Residues Pro-486–Pro-511 form a disordered region. The chain crosses the membrane as a helical span at residues Gly-518 to Leu-538.

This sequence belongs to the glycosyl hydrolase 18 family.

The protein localises to the cell membrane. The catalysed reaction is an N(4)-(oligosaccharide-(1-&gt;3)-[oligosaccharide-(1-&gt;6)]-beta-D-Man-(1-&gt;4)-beta-D-GlcNAc-(1-&gt;4)-alpha-D-GlcNAc)-L-asparaginyl-[protein] + H2O = an oligosaccharide-(1-&gt;3)-[oligosaccharide-(1-&gt;6)]-beta-D-Man-(1-&gt;4)-D-GlcNAc + N(4)-(N-acetyl-beta-D-glucosaminyl)-L-asparaginyl-[protein]. In terms of biological role, endoglycosidase with broad specificity that cleaves the chitobiose core of high mannose and complex N-linked glycans. Is able to release N-glycans from diverse host glycoproteins such as human and bovine lactoferrin, immunoglobulins A and G, and ribonuclease B. Is active directly on human breast milk - a complex matrix of lipids, oligosaccharides, and proteins with disparate glycosylation types - successfully removing a significant proportion of the total amount of N-glycans. Does not recognize O-linked glycans or free human milk oligosaccharides (HMO). This chain is Endo-beta-N-acetylglucosaminidase, found in Bifidobacterium longum subsp. infantis (strain ATCC 15697 / DSM 20088 / JCM 1222 / NCTC 11817 / S12).